Reading from the N-terminus, the 271-residue chain is Elongation factor Ts (271 aa).

Residues 76 to 79 are involved in Mg(2+) ion dislocation from EF-Tu; sequence TDFV.

It belongs to the EF-Ts family.

It is found in the cytoplasm. Associates with the EF-Tu.GDP complex and induces the exchange of GDP to GTP. It remains bound to the aminoacyl-tRNA.EF-Tu.GTP complex up to the GTP hydrolysis stage on the ribosome. This is Elongation factor Ts from Mycolicibacterium gilvum (strain PYR-GCK) (Mycobacterium gilvum (strain PYR-GCK)).